The sequence spans 666 residues: Magnesium-chelatase 67 kDa subunit (666 aa).

ATP is bound at residue 37-44; that stretch reads GRRGTGKT. The interval 327–367 is disordered; that stretch reads LPDEEEQMQPPPPPPPPPPPPEPDKPDDPETPPDEAPKDEQ. The span at 335–347 shows a compositional bias: pro residues; the sequence is QPPPPPPPPPPPP. A VWFA domain is found at 475 to 661; the sequence is LIIFVVDASG…SLAETVKSGV (187 aa).

The protein belongs to the Mg-chelatase subunits D/I family.

The enzyme catalyses protoporphyrin IX + Mg(2+) + ATP + H2O = Mg-protoporphyrin IX + ADP + phosphate + 3 H(+). Its pathway is porphyrin-containing compound metabolism; bacteriochlorophyll biosynthesis. Functionally, involved in bacteriochlorophyll biosynthesis; introduces a magnesium ion into protoporphyrin IX to yield Mg-protoporphyrin IX. The polypeptide is Magnesium-chelatase 67 kDa subunit (bchD) (Heliobacterium mobile (Heliobacillus mobilis)).